The following is a 332-amino-acid chain: DNA-directed RNA polymerase subunit alpha (332 aa).

Positions 1 to 234 (MIEYVIPKKL…NHLQIITDSL (234 aa)) are alpha N-terminal domain (alpha-NTD). The alpha C-terminal domain (alpha-CTD) stretch occupies residues 264-332 (AVYSKKIDEL…KFGLSLKKGG (69 aa)).

The protein belongs to the RNA polymerase alpha chain family. As to quaternary structure, homodimer. The RNAP catalytic core consists of 2 alpha, 1 beta, 1 beta' and 1 omega subunit. When a sigma factor is associated with the core the holoenzyme is formed, which can initiate transcription.

It catalyses the reaction RNA(n) + a ribonucleoside 5'-triphosphate = RNA(n+1) + diphosphate. Its function is as follows. DNA-dependent RNA polymerase catalyzes the transcription of DNA into RNA using the four ribonucleoside triphosphates as substrates. The polypeptide is DNA-directed RNA polymerase subunit alpha (Pseudothermotoga lettingae (strain ATCC BAA-301 / DSM 14385 / NBRC 107922 / TMO) (Thermotoga lettingae)).